The chain runs to 397 residues: Ribosomal RNA large subunit methyltransferase I (397 aa).

The PUA domain maps to 2–80 (AIRIKLKPGR…KEETIDADFF (79 aa)).

It belongs to the methyltransferase superfamily. RlmI family.

It localises to the cytoplasm. The enzyme catalyses cytidine(1962) in 23S rRNA + S-adenosyl-L-methionine = 5-methylcytidine(1962) in 23S rRNA + S-adenosyl-L-homocysteine + H(+). Functionally, specifically methylates the cytosine at position 1962 (m5C1962) of 23S rRNA. This Shewanella frigidimarina (strain NCIMB 400) protein is Ribosomal RNA large subunit methyltransferase I.